Consider the following 215-residue polypeptide: Small ribosomal subunit protein uS5 (215 aa).

The segment covering 1-11 (MTDSSPQSNPN) has biased composition (polar residues). A disordered region spans residues 1–61 (MTDSSPQSNP…GQDRDSEWQE (61 aa)). Residues 12-28 (AVPGAADVPAAAQGQQQ) are compositionally biased toward low complexity. The span at 39–61 (RGDRRGDRRGGRRGQDRDSEWQE) shows a compositional bias: basic and acidic residues. The 64-residue stretch at 59 to 122 (WQERVVQIRR…ADGKKHLVKV (64 aa)) folds into the S5 DRBM domain.

The protein belongs to the universal ribosomal protein uS5 family. Part of the 30S ribosomal subunit. Contacts proteins S4 and S8.

With S4 and S12 plays an important role in translational accuracy. Functionally, located at the back of the 30S subunit body where it stabilizes the conformation of the head with respect to the body. This Synechococcus sp. (strain CC9902) protein is Small ribosomal subunit protein uS5.